A 408-amino-acid chain; its full sequence is Protein CNPPD1 (408 aa).

Residues 233 to 253 (CLLAVAYVSSVALAVASMAVI) form a helical membrane-spanning segment.

The protein belongs to the CNPPD1 family.

It localises to the membrane. The protein is Protein CNPPD1 (Cnppd1) of Rattus norvegicus (Rat).